Reading from the N-terminus, the 93-residue chain is MSRSLKKGPYVEGRLLERVEKMNAANEKRVLKTWSRSSTIFPQMVGHTIAVHEGRKHIPIYITEDMVGHKLGEFAPTRTYKGHAGSEKSSGLR.

The protein belongs to the universal ribosomal protein uS19 family.

Functionally, protein S19 forms a complex with S13 that binds strongly to the 16S ribosomal RNA. This Desulfitobacterium hafniense (strain DSM 10664 / DCB-2) protein is Small ribosomal subunit protein uS19.